Consider the following 741-residue polypeptide: MESRDHNNPQEGPTSSSGRRAAVEDNHLLIKAVQNEDVDLVQQLLEGGANVNFQEEEGGWTPLHNAVQMSREDIVELLLRHGADPVLRKKNGATPFILAAIAGSVKLLKLFLSKGADVNECDFYGFTAFMEAAVYGKVKALKFLYKRGANVNLRRKTKEDQERLRKGGATALMDAAEKGHVEVLKILLDEMGADVNACDNMGRNALIHALLSSDDSDVEAITHLLLDHGADVNVRGERGKTPLILAVEKKHLGLVQRLLEQEHIEINDTDSDGKTALLLAVELKLKKIAELLCKRGASTDCGDLVMTARRNYDHSLVKVLLSHGAKEDFHPPAEDWKPQSSHWGAALKDLHRIYRPMIGKLKFFIDEKYKIADTSEGGIYLGFYEKQEVAVKTFCEGSPRAQREVSCLQSSRENSHLVTFYGSESHRGHLFVCVTLCEQTLEACLDVHRGEDVENEEDEFARNVLSSIFKAVQELHLSCGYTHQDLQPQNILIDSKKAAHLADFDKSIKWAGDPQEVKRDLEDLGRLVLYVVKKGSISFEDLKAQSNEEVVQLSPDEETKDLIHRLFHPGEHVRDCLSDLLGHPFFWTWESRYRTLRNVGNESDIKTRKSESEILRLLQPGPSEHSKSFDKWTTKINECVMKKMNKFYEKRGNFYQNTVGDLLKFIRNLGEHIDEEKHKKMKLKIGDPSLYFQKTFPDLVIYVYTKLQNTEYRKHFPQTHSPNKPQCDGAGGASGLASPGC.

The tract at residues 1–21 (MESRDHNNPQEGPTSSSGRRA) is disordered. Residues 9 to 18 (PQEGPTSSSG) are compositionally biased toward polar residues. 9 ANK repeats span residues 24-53 (EDNHLLIKAVQNEDVDLVQQLLEGGANVNF), 58-87 (GGWTPLHNAVQMSREDIVELLLRHGADPVL), 91-120 (NGATPFILAAIAGSVKLLKLFLSKGADVNE), 124-153 (YGFTAFMEAAVYGKVKALKFLYKRGANVNL), 167-197 (GGATALMDAAEKGHVEVLKILLDEMGADVNA), 201-234 (MGRNALIHALLSSDDSDVEAITHLLLDHGADVNV), 238-268 (RGKTPLILAVEKKHLGLVQRLLEQEHIEIND), 272-301 (DGKTALLLAVELKLKKIAELLCKRGASTDC), and 303-329 (DLVMTARRNYDHSLVKVLLSHGAKEDF). 2-5A binding (P-loop) stretches follow at residues 229–242 (GADVNVRGERGKTP) and 253–275 (GLVQRLLEQEHIEINDTDSDGKT). Residues 365–586 (IDEKYKIADT…LSDLLGHPFF (222 aa)) form the Protein kinase domain. A C6-type; atypical zinc finger spans residues 395-444 (CEGSPRAQREVSCLQSSRENSHLVTFYGSESHRGHLFVCVTLCEQTLEAC). The KEN domain occupies 589–723 (WESRYRTLRN…KHFPQTHSPN (135 aa)). An N6-acetyllysine modification is found at K684. The tract at residues 715–741 (HFPQTHSPNKPQCDGAGGASGLASPGC) is disordered.

This sequence belongs to the protein kinase superfamily. Monomer (inactive form) or homodimer. Interacts with ABCE1; this interaction inhibits the RNASEL. Requires Mn(2+) as cofactor. The cofactor is Mg(2+). Highly expressed in spleen and thymus followed by prostate, testis, uterus, small intestine, colon and peripheral blood leukocytes.

The protein resides in the cytoplasm. It localises to the mitochondrion. With respect to regulation, after binding to 2-5A (5'-phosphorylated 2',5'-linked oligoadenylates) the homodimerization and subsequent activation occurs. Inhibited by RNASEL inhibitor ABCE1/RLI, a cytoplasmic member of the ATP-binding cassette (ABC) transporter family. Its function is as follows. Endoribonuclease that functions in the interferon (IFN) antiviral response. In INF treated and virus infected cells, RNASEL probably mediates its antiviral effects through a combination of direct cleavage of single-stranded viral RNAs, inhibition of protein synthesis through the degradation of rRNA, induction of apoptosis, and induction of other antiviral genes. RNASEL mediated apoptosis is the result of a JNK-dependent stress-response pathway leading to cytochrome c release from mitochondria and caspase-dependent apoptosis. Therefore, activation of RNASEL could lead to elimination of virus infected cells under some circumstances. In the crosstalk between autophagy and apoptosis proposed to induce autophagy as an early stress response to small double-stranded RNA and at later stages of prolonged stress to activate caspase-dependent proteolytic cleavage of BECN1 to terminate autophagy and promote apoptosis. Might play a central role in the regulation of mRNA turnover. Cleaves 3' of UpNp dimers, with preference for UU and UA sequences, to sets of discrete products ranging from between 4 and 22 nucleotides in length. This is 2-5A-dependent ribonuclease (RNASEL) from Homo sapiens (Human).